The following is a 179-amino-acid chain: Large ribosomal subunit protein uL6 (179 aa).

It belongs to the universal ribosomal protein uL6 family. Part of the 50S ribosomal subunit.

Its function is as follows. This protein binds to the 23S rRNA, and is important in its secondary structure. It is located near the subunit interface in the base of the L7/L12 stalk, and near the tRNA binding site of the peptidyltransferase center. The sequence is that of Large ribosomal subunit protein uL6 from Prochlorococcus marinus (strain NATL2A).